We begin with the raw amino-acid sequence, 481 residues long: Cobyric acid synthase (481 aa).

In terms of domain architecture, GATase cobBQ-type spans 248–435; it reads ALTVAWLAFS…LHGMFGADGF (188 aa). Cys330 functions as the Nucleophile in the catalytic mechanism. His427 is an active-site residue.

The protein belongs to the CobB/CobQ family. CobQ subfamily.

It functions in the pathway cofactor biosynthesis; adenosylcobalamin biosynthesis. Catalyzes amidations at positions B, D, E, and G on adenosylcobyrinic A,C-diamide. NH(2) groups are provided by glutamine, and one molecule of ATP is hydrogenolyzed for each amidation. The protein is Cobyric acid synthase of Cereibacter sphaeroides (strain ATCC 17023 / DSM 158 / JCM 6121 / CCUG 31486 / LMG 2827 / NBRC 12203 / NCIMB 8253 / ATH 2.4.1.) (Rhodobacter sphaeroides).